Consider the following 515-residue polypeptide: ADP,ATP carrier protein 1 (515 aa).

12 helical membrane passes run 24–44 (LKKV…YTVL), 62–82 (AIPF…MLIY), 93–113 (ALFY…PTVI), 124–144 (EFAD…VAIL), 149–169 (FAAF…LMFW), 184–204 (FYAL…RAIV), 226–246 (LLMA…WWIN), 286–306 (YILL…LIEV), 329–349 (FSFW…GNVI), 358–378 (ALVT…LVIF), 383–403 (SGLV…VGAI), and 465–485 (IGAM…IWLV).

Belongs to the ADP/ATP translocase tlc family.

It localises to the cell membrane. This chain is ADP,ATP carrier protein 1 (tlcA), found in Chlamydia pneumoniae (Chlamydophila pneumoniae).